The following is a 393-amino-acid chain: Dual specificity mitogen-activated protein kinase kinase 1 (393 aa).

The tract at residues 1–27 (MPKKKPTPIQLNPAPDGSAVNGTSSAE) is disordered. Residues 68–361 (FEKISELGAG…LKQLMVHAFI (294 aa)) form the Protein kinase domain. Residues 74 to 82 (LGAGNGGVV) and Lys97 each bind ATP. The Proton acceptor role is filled by Asp190. 2 positions are modified to phosphoserine; by RAF: Ser218 and Ser222. The RAF1-binding stretch occupies residues 270 to 307 (ELELMFGCQVEGDAAETPPRPRTPGRPLSSYGMDSRPP). Position 286 is a phosphothreonine (Thr286). Thr292 is subject to Phosphothreonine; by MAPK1. Ser298 carries the phosphoserine; by PAK modification.

It belongs to the protein kinase superfamily. STE Ser/Thr protein kinase family. MAP kinase kinase subfamily. As to quaternary structure, found in a complex with at least BRAF, HRAS, MAP2K1, MAPK3/ERK1 and RGS14. Forms a heterodimer with MAP2K2/MEK2. Forms heterodimers with KSR2 which further dimerize to form tetramers. Interacts with KSR1 or KSR2 and BRAF; the interaction with KSR1 or KSR2 mediates KSR1-BRAF or KSR2-BRAF dimerization. Interacts with ARBB2, LAMTOR3, MAPK1/ERK2 and RAF1. Interacts with MAPK1/ERK2. Interacts with MORG1. Interacts with PPARG. Interacts with SGK1. Interacts with BIRC6/bruce. Interacts with KAT7; the interaction promotes KAT7 phosphorylation. Interacts with RAF1 and NEK10; the interaction is required for ERK1/2-signaling pathway activation in response to UV irradiation. Interacts with TRAF3IP3. Interacts with MOS. Post-translationally, phosphorylation at Ser-218 and Ser-222 by MAP kinase kinase kinases (RAF or MEKK1) positively regulates the kinase activity. Also phosphorylated at Thr-292 by MAPK1/ERK2 and at Ser-298 by PAK. MAPK1/ERK2 phosphorylation of Thr-292 occurs in response to cellular adhesion and leads to inhibition of Ser-298 phosphorylation by PAK. Autophosphorylated at Ser-218 and Ser-222, autophosphosphorylation is promoted by NEK10 following UV irradiation.

It localises to the cytoplasm. The protein localises to the cytoskeleton. Its subcellular location is the microtubule organizing center. It is found in the centrosome. The protein resides in the spindle pole body. It localises to the nucleus. The protein localises to the membrane. It carries out the reaction L-seryl-[protein] + ATP = O-phospho-L-seryl-[protein] + ADP + H(+). The catalysed reaction is L-threonyl-[protein] + ATP = O-phospho-L-threonyl-[protein] + ADP + H(+). The enzyme catalyses L-tyrosyl-[protein] + ATP = O-phospho-L-tyrosyl-[protein] + ADP + H(+). Its activity is regulated as follows. Ras proteins such as HRAS mediate the activation of RAF proteins such as RAF1 or BRAF which in turn activate extracellular signal-regulated kinases (ERK) through MAPK (mitogen-activated protein kinases) and ERK kinases MAP2K1/MEK1 and MAP2K2/MEK2. Activation occurs through phosphorylation of Ser-218 and Ser-222. MAP2K1/MEK1 binds KSR1 or KSR2 releasing the inhibitory intramolecular interaction between KSR1 or KSR2 protein kinase and N-terminal domains. This allows KSR1 or KSR2 dimerization with BRAF leading to BRAF activation and phosphorylation of MAP2K1. MAP2K1/MEK1 is also the target of negative feed-back regulation by its substrate kinases, such as MAPK1/ERK2. These phosphorylate MAP2K1/MEK1 on Thr-292, thereby facilitating dephosphorylation of the activating residues Ser-218 and Ser-222. Inhibited by serine/threonine phosphatase 2A. In terms of biological role, dual specificity protein kinase which acts as an essential component of the MAP kinase signal transduction pathway. Binding of extracellular ligands such as growth factors, cytokines and hormones to their cell-surface receptors activates RAS and this initiates RAF1 activation. RAF1 then further activates the dual-specificity protein kinases MAP2K1/MEK1 and MAP2K2/MEK2. Both MAP2K1/MEK1 and MAP2K2/MEK2 function specifically in the MAPK/ERK cascade, and catalyze the concomitant phosphorylation of a threonine and a tyrosine residue in a Thr-Glu-Tyr sequence located in the extracellular signal-regulated kinases MAPK3/ERK1 and MAPK1/ERK2, leading to their activation and further transduction of the signal within the MAPK/ERK cascade. Activates BRAF in a KSR1 or KSR2-dependent manner; by binding to KSR1 or KSR2 releases the inhibitory intramolecular interaction between KSR1 or KSR2 protein kinase and N-terminal domains which promotes KSR1 or KSR2-BRAF dimerization and BRAF activation. Depending on the cellular context, this pathway mediates diverse biological functions such as cell growth, adhesion, survival and differentiation, predominantly through the regulation of transcription, metabolism and cytoskeletal rearrangements. One target of the MAPK/ERK cascade is peroxisome proliferator-activated receptor gamma (PPARG), a nuclear receptor that promotes differentiation and apoptosis. MAP2K1/MEK1 has been shown to export PPARG from the nucleus. The MAPK/ERK cascade is also involved in the regulation of endosomal dynamics, including lysosome processing and endosome cycling through the perinuclear recycling compartment (PNRC), as well as in the fragmentation of the Golgi apparatus during mitosis. The protein is Dual specificity mitogen-activated protein kinase kinase 1 (MAP2K1) of Oryctolagus cuniculus (Rabbit).